The sequence spans 57 residues: MQLLYDLTKMNYSALYGEGRYLRIPAPIHYADKFVKALGKNWKIDEELLKHGFLYFI.

In terms of biological role, possibly the antitoxin component of a type II toxin-antitoxin (TA) system. Its cognate toxin is VapC4 (Potential). This Methanocaldococcus jannaschii (strain ATCC 43067 / DSM 2661 / JAL-1 / JCM 10045 / NBRC 100440) (Methanococcus jannaschii) protein is Putative antitoxin VapB4 (vapB4).